A 439-amino-acid chain; its full sequence is Rho GTPase-activating protein 1 (439 aa).

Position 1 is an N-acetylmethionine (M1). Basic and acidic residues predominate over residues 28 to 48 (IDEKNWPSDEMPDFPKSDDSK). The interval 28–55 (IDEKNWPSDEMPDFPKSDDSKSSSPEPV) is disordered. S44, S47, S50, and S51 each carry phosphoserine. The CRAL-TRIO domain maps to 63-218 (PYYDIARHQI…QVLKYDDFLK (156 aa)). Y65 is modified (phosphotyrosine). The residue at position 80 (K80) is an N6-acetyllysine. Positions 228–238 (PKPMPPRPPLP) match the SH3-binding motif. The region spanning 244–431 (VSLQHLQEKS…FLLDHQGELF (188 aa)) is the Rho-GAP domain.

As to quaternary structure, found in a complex with XPO7, EIF4A1, ARHGAP1, VPS26A, VPS29, VPS35 and SFN. Interacts with BNIPL.

It is found in the cytoplasm. GTPase activator for the Rho, Rac and Cdc42 proteins, converting them to the putatively inactive GDP-bound state. Cdc42 seems to be the preferred substrate. The protein is Rho GTPase-activating protein 1 (Arhgap1) of Mus musculus (Mouse).